We begin with the raw amino-acid sequence, 365 residues long: Methylthioribose-1-phosphate isomerase (365 aa).

Aspartate 255 (proton donor) is an active-site residue.

It belongs to the eIF-2B alpha/beta/delta subunits family. MtnA subfamily.

The protein localises to the cytoplasm. It is found in the nucleus. The catalysed reaction is 5-(methylsulfanyl)-alpha-D-ribose 1-phosphate = 5-(methylsulfanyl)-D-ribulose 1-phosphate. It functions in the pathway amino-acid biosynthesis; L-methionine biosynthesis via salvage pathway; L-methionine from S-methyl-5-thio-alpha-D-ribose 1-phosphate: step 1/6. Catalyzes the interconversion of methylthioribose-1-phosphate (MTR-1-P) into methylthioribulose-1-phosphate (MTRu-1-P). This Drosophila willistoni (Fruit fly) protein is Methylthioribose-1-phosphate isomerase.